A 562-amino-acid polypeptide reads, in one-letter code: Thermosome subunit alpha (562 aa).

Disordered regions lie at residues methionine 1 to glutamate 23 and glycine 526 to glycine 551. Over residues glycine 537–glycine 551 the composition is skewed to gly residues.

The protein belongs to the TCP-1 chaperonin family. In terms of assembly, forms an oligomeric complex of eight-membered rings.

Its function is as follows. Molecular chaperone; binds unfolded polypeptides in vitro, and has a weak ATPase activity. The chain is Thermosome subunit alpha (thsA) from Halobacterium salinarum (strain ATCC 700922 / JCM 11081 / NRC-1) (Halobacterium halobium).